A 292-amino-acid polypeptide reads, in one-letter code: Phosphoribulokinase, chromosomal (292 aa).

Position 12 to 20 (12 to 20 (GSSGAGTTS)) interacts with ATP.

The protein belongs to the phosphoribulokinase family. As to quaternary structure, homooctamer.

It carries out the reaction D-ribulose 5-phosphate + ATP = D-ribulose 1,5-bisphosphate + ADP + H(+). Its pathway is carbohydrate biosynthesis; Calvin cycle. The sequence is that of Phosphoribulokinase, chromosomal (cfxP) from Cupriavidus necator (strain ATCC 17699 / DSM 428 / KCTC 22496 / NCIMB 10442 / H16 / Stanier 337) (Ralstonia eutropha).